The sequence spans 573 residues: Urease subunit alpha (573 aa).

A Urease domain is found at 136 to 573 (GGIDCHVHFI…LPMAQRYFLF (438 aa)). 3 residues coordinate Ni(2+): His-141, His-143, and Lys-224. Lys-224 carries the post-translational modification N6-carboxylysine. His-226 is a binding site for substrate. 2 residues coordinate Ni(2+): His-253 and His-279. The Proton donor role is filled by His-327. Position 367 (Asp-367) interacts with Ni(2+).

The protein belongs to the metallo-dependent hydrolases superfamily. Urease alpha subunit family. In terms of assembly, heterotrimer of UreA (gamma), UreB (beta) and UreC (alpha) subunits. Three heterotrimers associate to form the active enzyme. Requires Ni cation as cofactor. In terms of processing, carboxylation allows a single lysine to coordinate two nickel ions.

The protein localises to the cytoplasm. It carries out the reaction urea + 2 H2O + H(+) = hydrogencarbonate + 2 NH4(+). The protein operates within nitrogen metabolism; urea degradation; CO(2) and NH(3) from urea (urease route): step 1/1. In Rhodococcus opacus (strain B4), this protein is Urease subunit alpha.